The following is a 128-amino-acid chain: Small ribosomal subunit protein uS9 (128 aa).

Basic and acidic residues predominate over residues 97 to 113 (RSEGFMTRDSRSVERKK). Positions 97–128 (RSEGFMTRDSRSVERKKPGQPKARRRFQFSKR) are disordered. Residues 114–128 (PGQPKARRRFQFSKR) are compositionally biased toward basic residues.

It belongs to the universal ribosomal protein uS9 family.

This chain is Small ribosomal subunit protein uS9, found in Phocaeicola vulgatus (strain ATCC 8482 / DSM 1447 / JCM 5826 / CCUG 4940 / NBRC 14291 / NCTC 11154) (Bacteroides vulgatus).